The chain runs to 362 residues: Alpha-glucoside transport ATP-binding protein AglK (362 aa).

An ABC transporter domain is found at L4–I235. An ATP-binding site is contributed by G36 to S43.

It belongs to the ABC transporter superfamily.

It is found in the cell inner membrane. In terms of biological role, part of the binding-protein-dependent transport system for alpha-glucosides such as sucrose, maltose and trehalose. Probably responsible for energy coupling to the transport system. The protein is Alpha-glucoside transport ATP-binding protein AglK (aglK) of Rhizobium meliloti (strain 1021) (Ensifer meliloti).